The chain runs to 214 residues: rRNA methyltransferase 2, mitochondrial (214 aa).

A mitochondrion-targeting transit peptide spans 1–18; the sequence is MFSTKKSQGNLHKYIQRQ. S-adenosyl-L-methionine contacts are provided by residues 63–66, D83, 100–101, and D125; these read PGSW and DI. The active-site Proton acceptor is the K169.

This sequence belongs to the class I-like SAM-binding methyltransferase superfamily. RNA methyltransferase RlmE family.

It localises to the mitochondrion. The catalysed reaction is a uridine in rRNA + S-adenosyl-L-methionine = a 2'-O-methyluridine in rRNA + S-adenosyl-L-homocysteine + H(+). In terms of biological role, S-adenosyl-L-methionine-dependent 2'-O-ribose methyltransferase that catalyzes the formation of 2'-O-methyluridine at position 808 (Um808) in the mitochondrial large subunit ribosomal RNA (mtLSU rRNA), a universally conserved modification in the peptidyl transferase domain of the mtLSU rRNA. This activity may require prior 2'-O-methylguanosine modification at position 809 (Gm809) by MRM3. Essential for late-stage assembly of mtLSU required for efficient translation of mitochondrial DNA encoded proteins; methyltransferase activity is not required for this function. Essential for mitochondrial respiratory function. This Caenorhabditis elegans protein is rRNA methyltransferase 2, mitochondrial.